The sequence spans 285 residues: Putative ankyrin repeat protein R551 (285 aa).

ANK repeat units follow at residues 99–129 (DLKS…PIKI), 157–186 (NDFD…LQDE), 188–214 (IGKI…EAFR), and 215–249 (SAPD…CIQQ).

The sequence is that of Putative ankyrin repeat protein R551 from Acanthamoeba polyphaga (Amoeba).